Here is a 527-residue protein sequence, read N- to C-terminus: Triostin synthetase I (527 aa).

187 to 188 contacts ATP; that stretch reads GG. 230–231 is a substrate binding site; that stretch reads HQ. Residues 300-302, Asp-406, Arg-421, and Lys-512 each bind ATP; that span reads SAP. Lys-512 serves as a coordination point for substrate.

The protein belongs to the ATP-dependent AMP-binding enzyme family. In terms of assembly, monomer.

Its function is as follows. Involved in triostin biosynthesis. Activates quinoxaline-2-carboxylic acid (QA) via catalysis of the ATP-pyrophosphate exchange reaction dependent on QA, and the formation of the corresponding adenylate. Also activates structural analogs of QA such as quinoline-2-carboxylic acid and thieno[3,2-b]pyridine-5-carboxylic acid, but not quinoline-3-carboxylic acid, quinoline-4-carboxylic acid, pyridine-2-carboxylic acid or 2-pyrazinecarboxylic acid. The chain is Triostin synthetase I (trsA) from Streptomyces triostinicus.